A 78-amino-acid chain; its full sequence is Large ribosomal subunit protein bL28 (78 aa).

Residues 1-28 are disordered; it reads MSRRCQVRGTKPEFGNNVSHSQRHTKRR.

It belongs to the bacterial ribosomal protein bL28 family.

This is Large ribosomal subunit protein bL28 from Cutibacterium acnes (strain DSM 16379 / KPA171202) (Propionibacterium acnes).